A 55-amino-acid polypeptide reads, in one-letter code: Large ribosomal subunit protein bL33 (55 aa).

It belongs to the bacterial ribosomal protein bL33 family.

The protein is Large ribosomal subunit protein bL33 of Erythrobacter litoralis (strain HTCC2594).